The following is a 277-amino-acid chain: uncharacterized protein (277 aa).

The next 5 helical transmembrane spans lie at Ile46–Leu66, Leu73–Met93, Thr143–Leu163, Phe174–Thr194, and Lys228–Val248.

Belongs to the oxidase-dependent Fe transporter (OFeT) (TC 9.A.10.1) family.

The protein localises to the cell membrane. This is an uncharacterized protein from Archaeoglobus fulgidus (strain ATCC 49558 / DSM 4304 / JCM 9628 / NBRC 100126 / VC-16).